Reading from the N-terminus, the 206-residue chain is Glutathione peroxidase 1 (206 aa).

Serine 37 is subject to Phosphoserine. Selenocysteine 52 is an active-site residue. A non-standard amino acid (selenocysteine) is located at residue selenocysteine 52. N6-acetyllysine; alternate is present on residues lysine 91, lysine 117, and lysine 151. Residues lysine 91, lysine 117, and lysine 151 each carry the N6-succinyllysine; alternate modification. 2 positions are modified to phosphoserine: serine 200 and serine 204.

It belongs to the glutathione peroxidase family. As to quaternary structure, homotetramer. Interacts with MIEN1. In terms of processing, during periods of oxidative stress, Sec-52 may react with a superoxide radical, irreversibly lose hydroselenide and be converted to dehydroalanine.

The protein localises to the cytoplasm. Its subcellular location is the mitochondrion. The enzyme catalyses 2 glutathione + H2O2 = glutathione disulfide + 2 H2O. The catalysed reaction is a hydroperoxy polyunsaturated fatty acid + 2 glutathione = a hydroxy polyunsaturated fatty acid + glutathione disulfide + H2O. It catalyses the reaction tert-butyl hydroperoxide + 2 glutathione = tert-butanol + glutathione disulfide + H2O. It carries out the reaction cumene hydroperoxide + 2 glutathione = 2-phenylpropan-2-ol + glutathione disulfide + H2O. The enzyme catalyses (13S)-hydroperoxy-(9Z,11E)-octadecadienoate + 2 glutathione = (13S)-hydroxy-(9Z,11E)-octadecadienoate + glutathione disulfide + H2O. The catalysed reaction is (9S)-hydroperoxy-(10E,12Z)-octadecadienoate + 2 glutathione = (9S)-hydroxy-(10E,12Z)-octadecadienoate + glutathione disulfide + H2O. It catalyses the reaction (5S)-hydroperoxy-(6E,8Z,11Z,14Z)-eicosatetraenoate + 2 glutathione = (5S)-hydroxy-(6E,8Z,11Z,14Z)-eicosatetraenoate + glutathione disulfide + H2O. It carries out the reaction (12S)-hydroperoxy-(5Z,8Z,10E,14Z)-eicosatetraenoate + 2 glutathione = (12S)-hydroxy-(5Z,8Z,10E,14Z)-eicosatetraenoate + glutathione disulfide + H2O. The enzyme catalyses (12R)-hydroperoxy-(5Z,8Z,10E,14Z)-eicosatetraenoate + 2 glutathione = (12R)-hydroxy-(5Z,8Z,10E,14Z)-eicosatetraenoate + glutathione disulfide + H2O. The catalysed reaction is (15S)-hydroperoxy-(5Z,8Z,11Z,13E)-eicosatetraenoate + 2 glutathione = (15S)-hydroxy-(5Z,8Z,11Z,13E)-eicosatetraenoate + glutathione disulfide + H2O. It catalyses the reaction (5S)-hydroperoxy-(6E,8Z,11Z,14Z,17Z)-eicosapentaenoate + 2 glutathione = (5S)-hydroxy-(6E,8Z,11Z,14Z,17Z)-eicosapentaenoate + glutathione disulfide + H2O. It carries out the reaction (12S)-hydroperoxy-(5Z,8Z,10E,14Z,17Z)-eicosapentaenoate + 2 glutathione = (12S)-hydroxy-(5Z,8Z,10E,14Z,17Z)-eicosapentaenoate + glutathione disulfide + H2O. The enzyme catalyses (15S)-hydroperoxy-(5Z,8Z,11Z,13E,17Z)-eicosapentaenoate + 2 glutathione = (15S)-hydroxy-(5Z,8Z,11Z,13E,17Z)-eicosapentaenoate + glutathione disulfide + H2O. The catalysed reaction is (15S)-hydroperoxy-(11Z,13E)-eicosadienoate + 2 glutathione = (15S)-hydroxy-(11Z,13E)-eicosadienoate + glutathione disulfide + H2O. It catalyses the reaction (17S)-hydroperoxy-(4Z,7Z,10Z,13Z,15E,19Z)-docosahexaenoate + 2 glutathione = (17S)-hydroxy-(4Z,7Z,10Z,13Z,15E,19Z)-docosahexaenoate + glutathione disulfide + H2O. Its function is as follows. Catalyzes the reduction of hydroperoxides in a glutathione-dependent manner thus regulating cellular redox homeostasis. Can reduce small soluble hydroperoxides such as H2O2, cumene hydroperoxide and tert-butyl hydroperoxide, as well as several fatty acid-derived hydroperoxides. In platelets catalyzes the reduction of 12-hydroperoxyeicosatetraenoic acid, the primary product of the arachidonate 12-lipoxygenase pathway. This is Glutathione peroxidase 1 (GPX1) from Sus scrofa (Pig).